The primary structure comprises 336 residues: HTH-type transcriptional repressor PurR (336 aa).

Positions 2–56 (ATIKDVAKMAGVSTTTVSHVINKTRFVAKDTEEAVLSAIKQLNYSPSAVARSLKV) constitute an HTH lacI-type domain. The segment at residues 4–23 (IKDVAKMAGVSTTTVSHVIN) is a DNA-binding region (H-T-H motif). Residues 48 to 56 (SAVARSLKV) mediate DNA binding. The hypoxanthine site is built by Tyr73, Lys188, Thr190, Phe219, and Asp273.

Homodimer.

It participates in purine metabolism; purine nucleotide biosynthesis [regulation]. Its function is as follows. Is the main repressor of the genes involved in the de novo synthesis of purine nucleotides, regulating purB, purC, purEK, purF, purHD, purL, purMN and guaBA expression. PurR is allosterically activated to bind its cognate DNA by binding the purine corepressors, hypoxanthine or guanine, thereby effecting transcription repression. The chain is HTH-type transcriptional repressor PurR from Haemophilus influenzae (strain 86-028NP).